We begin with the raw amino-acid sequence, 61 residues long: Odorranain-A6 (61 aa).

Positions 1–22 (MFSMKKSLLLLFFLGTISLSLC) are cleaved as a signal peptide. Positions 23-45 (EQERDAEEEEGSENGAEDIKINR) are excised as a propeptide.

This sequence belongs to the frog skin active peptide (FSAP) family. Brevinin subfamily. Expressed by the skin glands.

It is found in the secreted. This chain is Odorranain-A6, found in Odorrana hainanensis (Odor frog).